Consider the following 138-residue polypeptide: Large ribosomal subunit protein bL17 (138 aa).

It belongs to the bacterial ribosomal protein bL17 family. As to quaternary structure, part of the 50S ribosomal subunit. Contacts protein L32.

The polypeptide is Large ribosomal subunit protein bL17 (Solidesulfovibrio magneticus (strain ATCC 700980 / DSM 13731 / RS-1) (Desulfovibrio magneticus)).